The primary structure comprises 364 residues: Anhydro-N-acetylmuramic acid kinase (364 aa).

12 to 19 (GTSHDAID) provides a ligand contact to ATP.

This sequence belongs to the anhydro-N-acetylmuramic acid kinase family.

It carries out the reaction 1,6-anhydro-N-acetyl-beta-muramate + ATP + H2O = N-acetyl-D-muramate 6-phosphate + ADP + H(+). It functions in the pathway amino-sugar metabolism; 1,6-anhydro-N-acetylmuramate degradation. The protein operates within cell wall biogenesis; peptidoglycan recycling. In terms of biological role, catalyzes the specific phosphorylation of 1,6-anhydro-N-acetylmuramic acid (anhMurNAc) with the simultaneous cleavage of the 1,6-anhydro ring, generating MurNAc-6-P. Is required for the utilization of anhMurNAc either imported from the medium or derived from its own cell wall murein, and thus plays a role in cell wall recycling. The sequence is that of Anhydro-N-acetylmuramic acid kinase from Gamma-proteobacterium EBAC31A08.